We begin with the raw amino-acid sequence, 163 residues long: MAAAVVLAAGLRAARRAVAATGVRGGQVRGAAGVTDGNEVAKAQQATPGGAAPTIFSRILDKSLPADILYEDQQCLVFRDVAPQAPVHFLVIPKKPIPRISQAEEEDQQLLGHLLLVAKQTAKAEGLGDGYRLVINDGKLGAQSVYHLHIHVLGGRQLQWPPG.

The transit peptide at 1–17 directs the protein to the mitochondrion; that stretch reads MAAAVVLAAGLRAARRA. Positions 55-163 constitute an HIT domain; it reads IFSRILDKSL…GGRQLQWPPG (109 aa). AMP is bound by residues S63 and D80. K119 is subject to N6-acetyllysine. Residue N136 participates in AMP binding. K139 is modified (N6-acetyllysine). Residues 142–145 and 149–151 each bind AMP; these read AQSV and HIH. Residues 147 to 151 carry the Histidine triad motif motif; that stretch reads HLHIH. H149 (tele-AMP-histidine intermediate) is an active-site residue.

This sequence belongs to the HINT family. In terms of tissue distribution, high expression in liver and pancreas. Expression is significantly down-regulated in hepatocellular carcinoma (HCC) patients.

Its subcellular location is the mitochondrion. The enzyme catalyses adenosine 5'-phosphoramidate + H2O = AMP + NH4(+). In terms of biological role, exhibits adenosine 5'-monophosphoramidase activity, hydrolyzing purine nucleotide phosphoramidates with a single phosphate group such as adenosine 5'monophosphoramidate (AMP-NH2) to yield AMP and NH2. Hydrolyzes adenosine 5'-O-p-nitrophenylphosphoramidate (AMP-pNA). Hydrolyzes fluorogenic purine nucleoside tryptamine phosphoramidates in vitro. May be involved in steroid biosynthesis. May play a role in apoptosis. In Homo sapiens (Human), this protein is Adenosine 5'-monophosphoramidase HINT2.